We begin with the raw amino-acid sequence, 325 residues long: Lipoyl synthase (325 aa).

Residues 1 to 31 form a disordered region; the sequence is MASDSDLLDTKPAETRHPEKAHRPDQPTLRK. The segment covering 8–31 has biased composition (basic and acidic residues); the sequence is LDTKPAETRHPEKAHRPDQPTLRK. The [4Fe-4S] cluster site is built by cysteine 61, cysteine 66, cysteine 72, cysteine 87, cysteine 91, cysteine 94, and serine 300. The 217-residue stretch at 73 to 289 folds into the Radical SAM core domain; sequence WAKKHATFMI…AEIGRAKGFL (217 aa).

The protein belongs to the radical SAM superfamily. Lipoyl synthase family. [4Fe-4S] cluster serves as cofactor.

It localises to the cytoplasm. The enzyme catalyses [[Fe-S] cluster scaffold protein carrying a second [4Fe-4S](2+) cluster] + N(6)-octanoyl-L-lysyl-[protein] + 2 oxidized [2Fe-2S]-[ferredoxin] + 2 S-adenosyl-L-methionine + 4 H(+) = [[Fe-S] cluster scaffold protein] + N(6)-[(R)-dihydrolipoyl]-L-lysyl-[protein] + 4 Fe(3+) + 2 hydrogen sulfide + 2 5'-deoxyadenosine + 2 L-methionine + 2 reduced [2Fe-2S]-[ferredoxin]. The protein operates within protein modification; protein lipoylation via endogenous pathway; protein N(6)-(lipoyl)lysine from octanoyl-[acyl-carrier-protein]: step 2/2. Catalyzes the radical-mediated insertion of two sulfur atoms into the C-6 and C-8 positions of the octanoyl moiety bound to the lipoyl domains of lipoate-dependent enzymes, thereby converting the octanoylated domains into lipoylated derivatives. The sequence is that of Lipoyl synthase from Methylocella silvestris (strain DSM 15510 / CIP 108128 / LMG 27833 / NCIMB 13906 / BL2).